A 73-amino-acid polypeptide reads, in one-letter code: Cx9C motif-containing protein 4, mitochondrial (73 aa).

The CHCH domain occupies 2–44 (SNPCQKEACAIQDCLLSHQYDDAKCAKVIDQLYICCSKFYNDN). Short sequence motifs (cx9C motif) lie at residues 5-15 (CQKEACAIQDC) and 26-36 (CAKVIDQLYIC). Cystine bridges form between C5/C36 and C15/C26.

The protein belongs to the CMC4 family.

It is found in the mitochondrion intermembrane space. In Saccharomyces cerevisiae (strain ATCC 204508 / S288c) (Baker's yeast), this protein is Cx9C motif-containing protein 4, mitochondrial (CMC4).